A 301-amino-acid polypeptide reads, in one-letter code: Ubiquitin thioesterase OTU1 (301 aa).

Residues 4–80 (KVTGAGINQV…TIESSDSNES (77 aa)) form a UBX-like region. The 121-residue stretch at 109 to 229 (LSVHPVLDDN…GIHYDSLTMN (121 aa)) folds into the OTU domain. A cys-loop region spans residues 114-120 (VLDDNSC). D117 is a catalytic residue. C120 acts as the Nucleophile in catalysis. Residue K160 forms a Glycyl lysine isopeptide (Lys-Gly) (interchain with G-Cter in ubiquitin) linkage. Residues 169-179 (ILKMESWGGAI) form a variable-loop region. Residues 218–222 (FNGIH) form a his-loop region. I221 lines the substrate pocket. H222 is a catalytic residue. Residues 243 to 248 (DDVLTA) form an S2 site region. The segment at 270 to 294 (IKCNTCQMTFVGEREVARHAESTGH) adopts a C2H2-type zinc-finger fold. H294 is an active-site residue.

As to quaternary structure, forms a complex composed of CDC48, NPL4, UFD1, DOA1, SHP1 and deubiquitinase OTU1; within the complex interacts with CDC48 and DOA1/UFD3.

The protein localises to the cytoplasm. Its subcellular location is the nucleus. It catalyses the reaction Thiol-dependent hydrolysis of ester, thioester, amide, peptide and isopeptide bonds formed by the C-terminal Gly of ubiquitin (a 76-residue protein attached to proteins as an intracellular targeting signal).. In terms of biological role, hydrolase that can remove conjugated ubiquitin from proteins and may therefore play an important regulatory role at the level of protein turnover by preventing degradation. Participates in the regulation of the ubiquitin conjugation pathway involving CDC48 by hindering multiubiquitination of substrates at the CDC48 chaperone. May be indirectly involved in PIS1 gene expression. This Saccharomyces cerevisiae (strain ATCC 204508 / S288c) (Baker's yeast) protein is Ubiquitin thioesterase OTU1 (OTU1).